A 417-amino-acid chain; its full sequence is Multifunctional CCA protein (417 aa).

Positions 8 and 11 each coordinate ATP. Residues Gly-8 and Arg-11 each contribute to the CTP site. Asp-21 and Asp-23 together coordinate Mg(2+). ATP-binding residues include Arg-91, Arg-137, and Arg-140. Residues Arg-91, Arg-137, and Arg-140 each contribute to the CTP site. Positions 225-326 (SGIHTLMTLQ…LNVLKKTDAF (102 aa)) constitute an HD domain.

It belongs to the tRNA nucleotidyltransferase/poly(A) polymerase family. Bacterial CCA-adding enzyme type 1 subfamily. In terms of assembly, monomer. Can also form homodimers and oligomers. Mg(2+) is required as a cofactor. It depends on Ni(2+) as a cofactor.

It catalyses the reaction a tRNA precursor + 2 CTP + ATP = a tRNA with a 3' CCA end + 3 diphosphate. The catalysed reaction is a tRNA with a 3' CCA end + 2 CTP + ATP = a tRNA with a 3' CCACCA end + 3 diphosphate. Its function is as follows. Catalyzes the addition and repair of the essential 3'-terminal CCA sequence in tRNAs without using a nucleic acid template. Adds these three nucleotides in the order of C, C, and A to the tRNA nucleotide-73, using CTP and ATP as substrates and producing inorganic pyrophosphate. tRNA 3'-terminal CCA addition is required both for tRNA processing and repair. Also involved in tRNA surveillance by mediating tandem CCA addition to generate a CCACCA at the 3' terminus of unstable tRNAs. While stable tRNAs receive only 3'-terminal CCA, unstable tRNAs are marked with CCACCA and rapidly degraded. This Neisseria meningitidis serogroup C (strain 053442) protein is Multifunctional CCA protein.